Here is a 186-residue protein sequence, read N- to C-terminus: dCTP deaminase (186 aa).

Residue 107–112 participates in dCTP binding; it reads KSTYAR. Glu-133 (proton donor/acceptor) is an active-site residue. DCTP is bound by residues Gln-152, Tyr-166, and Gln-176.

The protein belongs to the dCTP deaminase family. In terms of assembly, homotrimer.

The enzyme catalyses dCTP + H2O + H(+) = dUTP + NH4(+). It participates in pyrimidine metabolism; dUMP biosynthesis; dUMP from dCTP (dUTP route): step 1/2. Catalyzes the deamination of dCTP to dUTP. In Campylobacter jejuni subsp. doylei (strain ATCC BAA-1458 / RM4099 / 269.97), this protein is dCTP deaminase.